Reading from the N-terminus, the 937-residue chain is AP-2 complex subunit beta (937 aa).

At T2 the chain carries N-acetylthreonine. Position 4 is a phosphoserine (S4). Residue K265 is modified to N6-acetyllysine. Y737 is subject to Phosphotyrosine; by SRC. The interaction with ARRB1 stretch occupies residues 841 to 937; sequence WKDIPNENEL…YQVYDSILKN (97 aa). Y928 carries the phosphotyrosine modification.

It belongs to the adaptor complexes large subunit family. As to quaternary structure, adaptor protein complex 2 (AP-2) is a heterotetramer composed of two large adaptins (alpha-type subunit AP2A1 or AP2A2 and beta-type subunit AP2B1), a medium adaptin (mu-type subunit AP2M1) and a small adaptin (sigma-type subunit AP2S1). Interacts with EPN1. Interacts with EPS15; clathrin competes with EPS15. Interacts with SNAP91; clathrin competes with SNAP91. Interacts with CLTC; clathrin competes with EPS15, SNAP91 and PIP5K1C. Interacts with LDLRAP1. Interacts with AMPH and BIN1. Interacts with ARF6 (GDP-bound). Interacts (dephosphorylated at Tyr-737) with ARRB1; phosphorylation of AP2B1 at Tyr-737 disrupts the interaction. Interacts with SLC2A8. Interacts with SCYL1 and SCYL2. Interacts with TGFBR1 and TGFBR2. Interacts with PIP5K1C; clathrin competes with PIP5K1C. Interacts with DENND1B, but not with DENND1A, nor DENND1C. Interacts with FCHO1. Interacts with RFTN1. Interacts with KIAA1107. Together with AP2A1 or AP2A2 and AP2M1, it interacts with ADAM10; this interaction facilitates ADAM10 endocytosis from the plasma membrane during long-term potentiation in hippocampal neurons. Phosphorylation at Tyr-737 by SRC occurs at the plasma membrane in clathrin-coated vesicles (CCVs). Expressed in the brain (at protein level).

The protein resides in the cell membrane. Its subcellular location is the membrane. The protein localises to the coated pit. Functionally, component of the adaptor protein complex 2 (AP-2). Adaptor protein complexes function in protein transport via transport vesicles in different membrane traffic pathways. Adaptor protein complexes are vesicle coat components and appear to be involved in cargo selection and vesicle formation. AP-2 is involved in clathrin-dependent endocytosis in which cargo proteins are incorporated into vesicles surrounded by clathrin (clathrin-coated vesicles, CCVs) which are destined for fusion with the early endosome. The clathrin lattice serves as a mechanical scaffold but is itself unable to bind directly to membrane components. Clathrin-associated adaptor protein (AP) complexes which can bind directly to both the clathrin lattice and to the lipid and protein components of membranes are considered to be the major clathrin adaptors contributing the CCV formation. AP-2 also serves as a cargo receptor to selectively sort the membrane proteins involved in receptor-mediated endocytosis. AP-2 seems to play a role in the recycling of synaptic vesicle membranes from the presynaptic surface. AP-2 recognizes Y-X-X-[FILMV] (Y-X-X-Phi) and [ED]-X-X-X-L-[LI] endocytosis signal motifs within the cytosolic tails of transmembrane cargo molecules. AP-2 may also play a role in maintaining normal post-endocytic trafficking through the ARF6-regulated, non-clathrin pathway. During long-term potentiation in hippocampal neurons, AP-2 is responsible for the endocytosis of ADAM10. The AP-2 beta subunit acts via its C-terminal appendage domain as a scaffolding platform for endocytic accessory proteins; at least some clathrin-associated sorting proteins (CLASPs) are recognized by their [DE]-X(1,2)-F-X-X-[FL]-X-X-X-R motif. The AP-2 beta subunit binds to clathrin heavy chain, promoting clathrin lattice assembly; clathrin displaces at least some CLASPs from AP2B1 which probably then can be positioned for further coat assembly. The polypeptide is AP-2 complex subunit beta (AP2B1) (Homo sapiens (Human)).